Reading from the N-terminus, the 125-residue chain is Type II secretion system protein I (125 aa).

A propeptide spans 1-5 (leader sequence); that stretch reads MKQQG. N-methylmethionine is present on Met-6. A helical membrane pass occupies residues 6–26; that stretch reads MTLLEVMVALVIFALAGLTVL.

This sequence belongs to the GSP I family. Type II secretion is composed of four main components: the outer membrane complex, the inner membrane complex, the cytoplasmic secretion ATPase and the periplasm-spanning pseudopilus. Interacts with core component OutG. Cleaved by prepilin peptidase. Post-translationally, methylated by prepilin peptidase at the amino group of the N-terminal methionine once the leader sequence is cleaved by prepilin peptidase.

The protein resides in the cell inner membrane. Functionally, component of the type II secretion system required for the energy-dependent secretion of extracellular factors such as proteases and toxins from the periplasm. Part of the pseudopilus tip complex that is critical for the recognition and binding of secretion substrates. The protein is Type II secretion system protein I (outI) of Dickeya chrysanthemi (Pectobacterium chrysanthemi).